The primary structure comprises 385 residues: MATLVREADGTARPGERPSSGARVFIAMSGGVDSSVAAARLCDAGYEVVGVTLHLWDYPDDGSVKSRCCAPEDQHDARRVADHLGIPHYTFDRRALFREHVVDPFVEAYLAGETPSPCVACNRSVKLRELFPLAERLGVSWVATGHYARVVLEEGGARLYRGRDRHKDQSYFLHMLRSDELSRLLFPLGDSTKDEVRAEAIARGLPGAEKGESQELCFIPSGRYAPFVADRAADRLRPGPIVDRDGRVVGSHGGVHGFTVGQRKGIGVSLGRPAFVVGLDAASGAVHLGDEGDLYAAGAEIADAVWCDDAVFPLEAEVRVRARHEAAPGIIERRRDPATGAESFVARFASPVRSVSPGQMAVVYRGDRVLGGGRIKAALRSQAAS.

ATP-binding positions include 27–34 and leucine 53; that span reads AMSGGVDS. Residue cysteine 121 is the Nucleophile of the active site. Cysteine 121 and cysteine 217 form a disulfide bridge. Glycine 145 lines the ATP pocket. The segment at 167 to 169 is interaction with tRNA; the sequence is KDQ. The Cysteine persulfide intermediate role is filled by cysteine 217.

This sequence belongs to the MnmA/TRMU family.

The protein resides in the cytoplasm. The enzyme catalyses S-sulfanyl-L-cysteinyl-[protein] + uridine(34) in tRNA + AH2 + ATP = 2-thiouridine(34) in tRNA + L-cysteinyl-[protein] + A + AMP + diphosphate + H(+). In terms of biological role, catalyzes the 2-thiolation of uridine at the wobble position (U34) of tRNA, leading to the formation of s(2)U34. The chain is tRNA-specific 2-thiouridylase MnmA from Sorangium cellulosum (strain So ce56) (Polyangium cellulosum (strain So ce56)).